The chain runs to 322 residues: Gluconeogenesis factor (322 aa).

The protein belongs to the gluconeogenesis factor family.

The protein localises to the cytoplasm. Its function is as follows. Required for morphogenesis under gluconeogenic growth conditions. The protein is Gluconeogenesis factor of Listeria monocytogenes serovar 1/2a (strain ATCC BAA-679 / EGD-e).